The sequence spans 226 residues: ATP-dependent dethiobiotin synthetase BioD (226 aa).

12–17 contacts ATP; that stretch reads GVGKTV. Thr16 provides a ligand contact to Mg(2+). Lys37 is a catalytic residue. Substrate is bound at residue Thr41. ATP is bound by residues Asp49, 108-111, 169-170, and 197-199; these read EGAG, GS, and PAG. Mg(2+) is bound by residues Asp49 and Glu108.

This sequence belongs to the dethiobiotin synthetase family. In terms of assembly, homodimer. The cofactor is Mg(2+).

Its subcellular location is the cytoplasm. The enzyme catalyses (7R,8S)-7,8-diammoniononanoate + CO2 + ATP = (4R,5S)-dethiobiotin + ADP + phosphate + 3 H(+). It participates in cofactor biosynthesis; biotin biosynthesis; biotin from 7,8-diaminononanoate: step 1/2. Its function is as follows. Catalyzes a mechanistically unusual reaction, the ATP-dependent insertion of CO2 between the N7 and N8 nitrogen atoms of 7,8-diaminopelargonic acid (DAPA, also called 7,8-diammoniononanoate) to form a ureido ring. This Mycobacterium tuberculosis (strain ATCC 25177 / H37Ra) protein is ATP-dependent dethiobiotin synthetase BioD.